A 930-amino-acid chain; its full sequence is Progesterone receptor (930 aa).

Residues 1 to 11 show a composition bias toward basic and acidic residues; that stretch reads MTELKAKEPRA. Disordered stretches follow at residues 1–133 and 148–260; these read MTEL…ASPA and LPED…SGAA. Residues 1–165 form an AF3; mediates transcriptional activation region; that stretch reads MTELKAKEPR…PATKGVLAPL (165 aa). Residues 1-565 form a modulating, Pro-Rich region; sequence MTELKAKEPR…PQYSFESLPQ (565 aa). Lys7 participates in a covalent cross-link: Glycyl lysine isopeptide (Lys-Gly) (interchain with G-Cter in SUMO). Ser20 carries the phosphoserine modification. Residues 38–49 are compositionally biased toward polar residues; the sequence is QGSQTSEASSVV. An LXXL motif 1 motif is present at residues 56 to 60; that stretch reads LDGLL. Ser82 carries the phosphoserine modification. Positions 116–120 match the LXXL motif 2 motif; sequence LDTLL. The residue at position 131 (Ser131) is a Phosphoserine. The segment at 166-304 is mediates transcriptional transrepression; it reads MSRPEDKAGD…LATSVVDFIH (139 aa). The Nuclear localization signal motif lies at 184–188; it reads KVLPR. Positions 187–204 are enriched in low complexity; that stretch reads PRGLSPSRQLLLPSSGSP. Residues Ser191 and Ser212 each carry the phosphoserine modification. The residue at position 293 (Ser293) is a Phosphoserine; by MAPK1. Residues 334-356 are disordered; the sequence is AASPFVPQRGSPSASSTPVAGGD. The residue at position 344 (Ser344) is a Phosphoserine; by MAPK. A Glycyl lysine isopeptide (Lys-Gly) (interchain with G-Cter in SUMO); alternate cross-link involves residue Lys387. Lys387 participates in a covalent cross-link: Glycyl lysine isopeptide (Lys-Gly) (interchain with G-Cter in ubiquitin); alternate. A Phosphoserine; by CDK2 modification is found at Ser399. Residues 415 to 454 are disordered; it reads DFQLAAPPPPSLPPRVPSSRPGEAAVAASPGSASVSSSSS. Pro residues predominate over residues 420–430; that stretch reads APPPPSLPPRV. Over residues 431–454 the composition is skewed to low complexity; the sequence is PSSRPGEAAVAASPGSASVSSSSS. The tract at residues 457 to 547 is AF1; mediates transcriptional activation; sequence STLECILYKA…VYTPYLNYLR (91 aa). Lys532 is covalently cross-linked (Glycyl lysine isopeptide (Lys-Gly) (interchain with G-Cter in SUMO)). The nuclear receptor DNA-binding region spans 566–640; the sequence is KICLICGDEA…AGMVLGGRKF (75 aa). 2 NR C4-type zinc fingers span residues 568 to 588 and 604 to 628; these read CLICGDEASGCHYGVLTCGSC and CAGRNDCIVDKIRRKNCPACRLRKC. Ser673 carries the phosphoserine modification. An NR LBD domain is found at 676–910; the sequence is QEIQLIPPLI…EFPEMMSEVI (235 aa). An AF2; mediates transcriptional activation region spans residues 684–930; it reads LINLLMSIEP…MVKPLLFHKK (247 aa). A progesterone-binding site is contributed by Arg763.

This sequence belongs to the nuclear hormone receptor family. NR3 subfamily. Interacts with SMARD1 and UNC45A. Interacts with CUEDC2; the interaction promotes ubiquitination, decreases sumoylation, and represses transcriptional activity. Interacts with PIAS3; the interaction promotes sumoylation of PR in a hormone-dependent manner, inhibits DNA-binding, and alters nuclear export. Interacts with SP1; the interaction requires ligand-induced phosphorylation on Ser-344 by ERK1/2-MAPK. Interacts with PRMT2. Interacts with NCOA2 and NCOA1. Interacts with KLF9. Interacts with GTF2B. Phosphorylated on multiple serine sites. Several of these sites are hormone-dependent. Phosphorylation on Ser-293 is highly hormone-dependent and modulates ubiquitination and sumoylation on Lys-387. Phosphorylation on Ser-102 and Ser-344 also requires induction by hormone. Basal phosphorylation on Ser-82, Ser-191 and Ser-399 is increased in response to progesterone and can be phosphorylated in vitro by the CDK2-A1 complex. Increased levels of phosphorylation on Ser-399 also in the presence of EGF, heregulin, IGF, PMA and FBS. Phosphorylation at this site by CDK2 is ligand-independent, and increases nuclear translocation and transcriptional activity. Phosphorylation at Ser-293, but not at Ser-191, is impaired during the G(2)/M phase of the cell cycle. Phosphorylation on Ser-344 by ERK1/2 MAPK is required for interaction with SP1. Post-translationally, sumoylation is hormone-dependent and represses transcriptional activity. Sumoylation on all three sites is enhanced by PIAS3. Desumoylated by SENP1. Sumoylation on Lys-387, the main site of sumoylation, is repressed by ubiquitination on the same site, and modulated by phosphorylation at Ser-293. In terms of processing, ubiquitination is hormone-dependent and represses sumoylation on the same site. Promoted by MAPK-mediated phosphorylation on Ser-293. Ubiquitinated by UBR5, leading to its degradation: UBR5 specifically recognizes and binds ligand-bound PGR when it is not associated with coactivators (NCOAs). In presence of NCOAs, the UBR5-degron is not accessible, preventing its ubiquitination and degradation. Palmitoylated by ZDHHC7 and ZDHHC21. Palmitoylation is required for plasma membrane targeting and for rapid intracellular signaling via ERK and AKT kinases and cAMP generation.

The protein resides in the nucleus. The protein localises to the cytoplasm. The steroid hormones and their receptors are involved in the regulation of eukaryotic gene expression and affect cellular proliferation and differentiation in target tissues. Transcriptional activator of several progesteron-dependent promoters in a variety of cell types. Involved in activation of SRC-dependent MAPK signaling on hormone stimulation. This is Progesterone receptor (PGR) from Oryctolagus cuniculus (Rabbit).